Consider the following 426-residue polypeptide: Protein PHOSPHATE STARVATION RESPONSE 2 (426 aa).

3 disordered regions span residues 27-81, 96-123, and 198-247; these read ATLD…PLRS, YTNA…QYGG, and TQPQ…NSKT. Positions 69–81 are enriched in polar residues; the sequence is FQSSTGSVGPLRS. 2 stretches are compositionally biased toward low complexity: residues 102–119 and 205–225; these read YNSQ…NYGS and AAQS…SSQS. The span at 237–246 shows a compositional bias: polar residues; it reads SGASNTSNSK. The 61-residue stretch at 243-303 folds into the HTH myb-type domain; sequence SNSKTRMRWT…HLQKYRTARY (61 aa). The H-T-H motif DNA-binding region spans 274 to 299; sequence PKGVLKLMKADNLTIYHVKSHLQKYR. 2 disordered regions span residues 302-326 and 382-426; these read RYRP…PSID and DKAV…SGDR. Basic and acidic residues predominate over residues 303-322; that stretch reads YRPELSEGSSEKKAASKEDI. Polar residues-rich tracts occupy residues 387–401 and 411–426; these read ASTS…SDLP and ENSQ…SGDR.

As to quaternary structure, interacts (via C-terminus) with SPX4 (via N-terminus) in the presence of inositol polyphosphate. Interacts (via C-terminus) with SPX1 and SPX2 (via SPX domain). Interacts with RLI1 in the nucleus.

The protein localises to the nucleus. Its subcellular location is the cytoplasm. Transcription factor involved in phosphate starvation signaling. Binds to P1BS, an imperfect palindromic sequence 5'-GNATATNC-3', to promote the expression of inorganic phosphate (Pi) starvation-responsive genes. Functionally redundant with PHR1 and PHR3 in regulating Pi starvation response and Pi homeostasis. Involved in both systematic and local Pi-signaling pathways. Regulates several Pi transporters. PHR2 binding to DNA is repressed redundantly by SPX1, SPX2 and SPX4 in a PI-dependent manner. The DNA-binding activity is also repressed by SPX4. Involved in root growth under Pi deprivation. Involved in the modulation of Pi response and homeostasis together with RLI1; promotes RLI1 expression in response to nitrate availability, thus triggering the nitrate-induced phosphate response (NIPR). The chain is Protein PHOSPHATE STARVATION RESPONSE 2 from Oryza sativa subsp. indica (Rice).